Here is a 150-residue protein sequence, read N- to C-terminus: Transcriptional repressor NrdR (150 aa).

Residues C3 to C34 fold into a zinc finger. Positions I49–E139 constitute an ATP-cone domain.

The protein belongs to the NrdR family. Zn(2+) serves as cofactor.

Its function is as follows. Negatively regulates transcription of bacterial ribonucleotide reductase nrd genes and operons by binding to NrdR-boxes. In Dictyoglomus turgidum (strain DSM 6724 / Z-1310), this protein is Transcriptional repressor NrdR.